A 227-amino-acid chain; its full sequence is LysM and putative peptidoglycan-binding domain-containing protein 1 (227 aa).

Residues 1-11 (MASPSRQPPPG) are compositionally biased toward pro residues. The tract at residues 1 to 20 (MASPSRQPPPGGSGLLHGSR) is disordered. Phosphoserine is present on residues Ser-23 and Ser-33. Residues 40-84 (LEHQLEPGDTLAGLALKYGVTMEQIKRANRLYTNDSIFLKKTLYI) form the LysM domain. Residues 95–150 (NGLDSEEEKDGEEEVRPSNDEVWPHSTERKKQETGAGRANGEVFPTPGQETPTPIH) form a disordered region. Residues 98–107 (DSEEEKDGEE) are compositionally biased toward acidic residues. Ser-99 bears the Phosphoserine mark. A compositionally biased stretch (basic and acidic residues) spans 108–127 (EVRPSNDEVWPHSTERKKQE). Phosphoserine is present on residues Ser-166, Ser-181, Ser-194, and Ser-212. Residues 172–196 (AAQKLKKGESGVPGEDAGLHLSSPR) form a disordered region.

The chain is LysM and putative peptidoglycan-binding domain-containing protein 1 (LYSMD1) from Macaca fascicularis (Crab-eating macaque).